Reading from the N-terminus, the 236-residue chain is 1-(5-phosphoribosyl)-5-[(5-phosphoribosylamino)methylideneamino] imidazole-4-carboxamide isomerase (236 aa).

Residue Asp-8 is the Proton acceptor of the active site. Residue Asp-129 is the Proton donor of the active site.

Belongs to the HisA/HisF family.

The protein resides in the cytoplasm. The enzyme catalyses 1-(5-phospho-beta-D-ribosyl)-5-[(5-phospho-beta-D-ribosylamino)methylideneamino]imidazole-4-carboxamide = 5-[(5-phospho-1-deoxy-D-ribulos-1-ylimino)methylamino]-1-(5-phospho-beta-D-ribosyl)imidazole-4-carboxamide. The protein operates within amino-acid biosynthesis; L-histidine biosynthesis; L-histidine from 5-phospho-alpha-D-ribose 1-diphosphate: step 4/9. The polypeptide is 1-(5-phosphoribosyl)-5-[(5-phosphoribosylamino)methylideneamino] imidazole-4-carboxamide isomerase (Methanoregula boonei (strain DSM 21154 / JCM 14090 / 6A8)).